A 51-amino-acid polypeptide reads, in one-letter code: Putative antitoxin VapB6 (51 aa).

Functionally, antitoxin component of a possible type II toxin-antitoxin (TA) system. The cognate toxin is VapC6. This is Putative antitoxin VapB6 (vapB6) from Mycobacterium tuberculosis (strain CDC 1551 / Oshkosh).